The sequence spans 200 residues: UPF0637 protein LCK_01372 (200 aa).

Belongs to the UPF0637 family.

The protein is UPF0637 protein LCK_01372 of Leuconostoc citreum (strain KM20).